Reading from the N-terminus, the 139-residue chain is Transcription antitermination protein NusB (139 aa).

Belongs to the NusB family.

Involved in transcription antitermination. Required for transcription of ribosomal RNA (rRNA) genes. Binds specifically to the boxA antiterminator sequence of the ribosomal RNA (rrn) operons. This is Transcription antitermination protein NusB from Salmonella agona (strain SL483).